A 607-amino-acid chain; its full sequence is Elongation factor 4 (607 aa).

A tr-type G domain is found at Ser11–Ala193. GTP contacts are provided by residues Asp23–Thr28 and Asn140–Asp143.

The protein belongs to the TRAFAC class translation factor GTPase superfamily. Classic translation factor GTPase family. LepA subfamily.

It localises to the cell membrane. The catalysed reaction is GTP + H2O = GDP + phosphate + H(+). Its function is as follows. Required for accurate and efficient protein synthesis under certain stress conditions. May act as a fidelity factor of the translation reaction, by catalyzing a one-codon backward translocation of tRNAs on improperly translocated ribosomes. Back-translocation proceeds from a post-translocation (POST) complex to a pre-translocation (PRE) complex, thus giving elongation factor G a second chance to translocate the tRNAs correctly. Binds to ribosomes in a GTP-dependent manner. This is Elongation factor 4 from Bacillus cereus (strain ATCC 14579 / DSM 31 / CCUG 7414 / JCM 2152 / NBRC 15305 / NCIMB 9373 / NCTC 2599 / NRRL B-3711).